The primary structure comprises 107 residues: Protein p13 MTCP-1 (107 aa).

It belongs to the TCL1 family. In terms of assembly, interacts with AKT1 and AKT2 (via PH domain). Does not interact with AKT3. Not found at a significant level in any tissue.

In terms of biological role, enhances the phosphorylation and activation of AKT1 and AKT2. The chain is Protein p13 MTCP-1 (MTCP1) from Homo sapiens (Human).